The sequence spans 474 residues: Aspartyl/glutamyl-tRNA(Asn/Gln) amidotransferase subunit B (474 aa).

The protein belongs to the GatB/GatE family. GatB subfamily. Heterotrimer of A, B and C subunits.

It carries out the reaction L-glutamyl-tRNA(Gln) + L-glutamine + ATP + H2O = L-glutaminyl-tRNA(Gln) + L-glutamate + ADP + phosphate + H(+). It catalyses the reaction L-aspartyl-tRNA(Asn) + L-glutamine + ATP + H2O = L-asparaginyl-tRNA(Asn) + L-glutamate + ADP + phosphate + 2 H(+). Allows the formation of correctly charged Asn-tRNA(Asn) or Gln-tRNA(Gln) through the transamidation of misacylated Asp-tRNA(Asn) or Glu-tRNA(Gln) in organisms which lack either or both of asparaginyl-tRNA or glutaminyl-tRNA synthetases. The reaction takes place in the presence of glutamine and ATP through an activated phospho-Asp-tRNA(Asn) or phospho-Glu-tRNA(Gln). This Helicobacter hepaticus (strain ATCC 51449 / 3B1) protein is Aspartyl/glutamyl-tRNA(Asn/Gln) amidotransferase subunit B.